We begin with the raw amino-acid sequence, 79 residues long: Cytochrome b (79 aa).

A run of 3 helical transmembrane segments spans residues 1–7 (SALFLAM), 31–52 (WLIR…YLHI), and 67–79 (WNIG…LTMA). 2 residues coordinate heme b: His-37 and His-51.

It belongs to the cytochrome b family. In terms of assembly, the cytochrome bc1 complex contains 11 subunits: 3 respiratory subunits (MT-CYB, CYC1 and UQCRFS1), 2 core proteins (UQCRC1 and UQCRC2) and 6 low-molecular weight proteins (UQCRH/QCR6, UQCRB/QCR7, UQCRQ/QCR8, UQCR10/QCR9, UQCR11/QCR10 and a cleavage product of UQCRFS1). This cytochrome bc1 complex then forms a dimer. Heme b serves as cofactor.

The protein resides in the mitochondrion inner membrane. In terms of biological role, component of the ubiquinol-cytochrome c reductase complex (complex III or cytochrome b-c1 complex) that is part of the mitochondrial respiratory chain. The b-c1 complex mediates electron transfer from ubiquinol to cytochrome c. Contributes to the generation of a proton gradient across the mitochondrial membrane that is then used for ATP synthesis. The sequence is that of Cytochrome b (MT-CYB) from Dipodomys heermanni (Heermann's kangaroo rat).